A 493-amino-acid chain; its full sequence is ATP synthase subunit beta 3 (493 aa).

Residues 113–138 (VPGDNGTPLPPGTPRRPIHRKPPPLA) form a disordered region. 170–177 (GGAGVGKT) lines the ATP pocket.

The protein belongs to the ATPase alpha/beta chains family. As to quaternary structure, F-type ATPases have 2 components, CF(1) - the catalytic core - and CF(0) - the membrane proton channel. CF(1) has five subunits: alpha(3), beta(3), gamma(1), delta(1), epsilon(1). CF(0) has three main subunits: a(1), b(2) and c(9-12). The alpha and beta chains form an alternating ring which encloses part of the gamma chain. CF(1) is attached to CF(0) by a central stalk formed by the gamma and epsilon chains, while a peripheral stalk is formed by the delta and b chains.

The protein localises to the cell inner membrane. The enzyme catalyses ATP + H2O + 4 H(+)(in) = ADP + phosphate + 5 H(+)(out). Its function is as follows. Produces ATP from ADP in the presence of a proton gradient across the membrane. The catalytic sites are hosted primarily by the beta subunits. The chain is ATP synthase subunit beta 3 from Paraburkholderia xenovorans (strain LB400).